Here is a 1123-residue protein sequence, read N- to C-terminus: Nicotinic receptor-associated protein 4 (1123 aa).

The N-terminal stretch at 1–18 is a signal peptide; that stretch reads MGSLPLILLSLLLPGALA. Over 19-1071 the chain is Lumenal; it reads NVYSCAGSVK…TSSKRANDVD (1053 aa). Residues 1072 to 1092 traverse the membrane as a helical segment; the sequence is ISVGTFLSLPFFVTLALVFFN. Residues 1093 to 1123 lie on the Cytoplasmic side of the membrane; that stretch reads QNRVLELLGTFIDWARNTFAPTADNHHRKRK.

May interact with nra-2 in the ER. As to expression, expressed in body wall, pharyngeal, uterine and vulval muscles, motor neurons, nerve ring, motor and ventral cord neurons, hypodermal cells in the tail, vulval epithelium and intestine.

Its subcellular location is the endoplasmic reticulum membrane. Involved in the recognition and selection of protein complexes to exit the endoplasmic reticulum (ER). In muscles, regulates levamisole-sensitive nicotinic acetylcholine receptor (L-AChR) subunit composition, possibly by allowing only specific L-AChR subunit combinations to exit the ER. Specifically, may promote the inclusion of alpha subunit unc-38 into and the exclusion of unc-29 from L-AChR. Regulates L-AChR sensitivity to agonists such as nicotine and levamisole at neuro-muscular junctions. This Caenorhabditis elegans protein is Nicotinic receptor-associated protein 4.